Reading from the N-terminus, the 193-residue chain is MAAIRKKLVIVGDGACGKTCLLIVFSKDQFPEVYVPTVFENYVADIEVDSKQVELALWDTAGQEDYDRLRPLSYPDTDVILMCFSIDSPDSLENIPEKWTPEVKHFCPNVPIILVGNKKDLRNDEHTRRELAKMKQEPVKPEEGRDMANRINAFGYLECSAKTKDGVREVFEMATRAALQARKRGKKSGCLLL.

Residues 12–19 (GDGACGKT), 30–37 (FPEVYVPT), 59–63 (DTAGQ), 117–120 (NKKD), and 160–162 (SAK) each bind GTP. Tyr34 carries (Microbial infection) O-linked (GlcNAc) tyrosine; by Yersinia Afp18 glycosylation. Residue Cys190 is modified to Cysteine methyl ester. Cys190 is lipidated: S-geranylgeranyl cysteine. Positions 191-193 (LLL) are cleaved as a propeptide — removed in mature form.

The protein belongs to the small GTPase superfamily. Rho family. In terms of processing, (Microbial infection) Glycosylated at Tyr-34 by Yersinia ruckeri toxin Afp18. Mono-O-GlcNAcylation by Afp18 inhibits RhoA activation by guanine nucleotide exchange factors and blocks RhoA signaling.

The protein resides in the cell membrane. Functionally, regulates a signal transduction pathway linking plasma membrane receptors to the assembly of focal adhesions and actin stress fibers. This chain is Rho-related GTP-binding protein RhoA-C, found in Danio rerio (Zebrafish).